A 600-amino-acid polypeptide reads, in one-letter code: Aspartate--tRNA(Asp/Asn) ligase (600 aa).

E187 provides a ligand contact to L-aspartate. The aspartate stretch occupies residues 211 to 214; it reads QIFK. Positions 233 and 463 each coordinate L-aspartate. 233–235 is an ATP binding site; the sequence is RDE. Residue E497 participates in ATP binding. R504 is a binding site for L-aspartate. An ATP-binding site is contributed by 549 to 552; that stretch reads GVDR.

Belongs to the class-II aminoacyl-tRNA synthetase family. Type 1 subfamily. As to quaternary structure, homodimer.

Its subcellular location is the cytoplasm. The enzyme catalyses tRNA(Asx) + L-aspartate + ATP = L-aspartyl-tRNA(Asx) + AMP + diphosphate. Functionally, aspartyl-tRNA synthetase with relaxed tRNA specificity since it is able to aspartylate not only its cognate tRNA(Asp) but also tRNA(Asn). Reaction proceeds in two steps: L-aspartate is first activated by ATP to form Asp-AMP and then transferred to the acceptor end of tRNA(Asp/Asn). This Wolbachia pipientis wMel protein is Aspartate--tRNA(Asp/Asn) ligase.